The following is a 627-amino-acid chain: WPP domain-interacting tail-anchored protein 2 (627 aa).

3 coiled-coil regions span residues Cys-81–Leu-152, Leu-188–Tyr-218, and Thr-312–Arg-542. Residues Ser-577 to Ser-597 form a disordered region. The segment covering Glu-580 to Ser-597 has biased composition (basic and acidic residues). The chain crosses the membrane as a helical span at residues Leu-606–Thr-626.

Component of Ran complexes at least composed of WIT1 or WIT2, RANGAP1 or RANGAP2, and WIP1 or WIP2 or WIP3. Interacts with KAKU1. Core component of the LINC complex which is composed of inner nuclear membrane SUN domain-containing proteins coupled to outer nuclear membrane WIP and WIT proteins. The LINC complex also involves nucleoskeletal proteins CRWN/LINC and possibly KAKU4 and the cytoskeletal myosin KAKU1. Interacts with WIP1, WIP2 and WIP3. As to expression, ubiquitous.

Its subcellular location is the membrane. In terms of biological role, together with WIT1, required for the nuclear envelope docking of RANGAP proteins in root tips. Plays a role in nuclear shape determination. As component of the SUN-WIP-WIT2-KAKU1 complex, mediates the transfer of cytoplasmic forces to the nuclear envelope (NE), leading to nuclear shape changes. The sequence is that of WPP domain-interacting tail-anchored protein 2 (WIT2) from Arabidopsis thaliana (Mouse-ear cress).